The sequence spans 274 residues: 4-diphosphocytidyl-2-C-methyl-D-erythritol kinase (274 aa).

The active site involves Lys8. An ATP-binding site is contributed by 94-104 (PSGAGLGGGSA). Asp136 is an active-site residue.

It belongs to the GHMP kinase family. IspE subfamily.

The enzyme catalyses 4-CDP-2-C-methyl-D-erythritol + ATP = 4-CDP-2-C-methyl-D-erythritol 2-phosphate + ADP + H(+). The protein operates within isoprenoid biosynthesis; isopentenyl diphosphate biosynthesis via DXP pathway; isopentenyl diphosphate from 1-deoxy-D-xylulose 5-phosphate: step 3/6. Functionally, catalyzes the phosphorylation of the position 2 hydroxy group of 4-diphosphocytidyl-2C-methyl-D-erythritol. The protein is 4-diphosphocytidyl-2-C-methyl-D-erythritol kinase of Bacteroides fragilis (strain ATCC 25285 / DSM 2151 / CCUG 4856 / JCM 11019 / LMG 10263 / NCTC 9343 / Onslow / VPI 2553 / EN-2).